Here is a 1406-residue protein sequence, read N- to C-terminus: Inactive tyrosine-protein kinase PRAG1 (1406 aa).

Ser-148 is modified (phosphoserine). Residues 184 to 193 (EEKAVHKEKP) show a composition bias toward basic and acidic residues. Disordered stretches follow at residues 184-205 (EEKA…STQE) and 217-248 (TTSG…SGDS). Residues Tyr-253, Tyr-365, and Tyr-413 each carry the phosphotyrosine modification. Disordered regions lie at residues 372 to 470 (PAPE…TPQV) and 484 to 854 (DHRT…HSET). Basic and acidic residues predominate over residues 526-542 (RESHAHSASESKPKERP). Low complexity predominate over residues 546-576 (PKLSKSSPVGSPVSPSAGGPPVSPLADLSDG). Polar residues-rich tracts occupy residues 660-671 (NGPTDHSNSTTW) and 678-695 (DGSS…SKSA). Phosphoserine is present on residues Ser-696 and Ser-745. 2 stretches are compositionally biased toward polar residues: residues 737-746 (SQGSAESLSP) and 754-770 (SFTT…SRTC). Ser-782 carries the phosphoserine modification. Polar residues predominate over residues 798 to 808 (SGSTEDVSPSG). Position 826 is a phosphoserine (Ser-826). Residues 933–976 (STQLQLHGLLSNISSKEGTYAKLGGLYTQSLARLVAKCEDLFMG) are required for homodimerization. One can recognise a Protein kinase domain in the interval 978-1329 (QKKELHFNEN…EAKRVLQCLL (352 aa)). The span at 1163 to 1173 (GPAPAPAPAPA) shows a compositional bias: pro residues. Residues 1163–1206 (GPAPAPAPAPAPAAAAPPCSSAAPPAGGTLSPAAGPASPEGPRE) form a disordered region. Over residues 1174-1202 (PAAAAPPCSSAAPPAGGTLSPAAGPASPE) the composition is skewed to low complexity. Residues 1331 to 1406 (GPRRELVQQP…LQSLKLLQLL (76 aa)) are required for homodimerization.

Belongs to the protein kinase superfamily. As to quaternary structure, homodimer. Dimerization leads to the catalytic activation of CSK. Interacts (via C-terminus) with RND2. Interacts with CSK (via SH2 domain) in a Tyr-413 phosphorylation-dependent manner; this interaction potentiates kinase activity of CSK. Interacts with PEAK1. Interacts with NOTCH1 intracellular domain (N1ICD). Forms a complex with N1ICD and MAML1, in a MAML1-dependent manner. Post-translationally, phosphorylated by CSK on Tyr-253, Tyr-365, and Tyr-413; Tyr-413 is a primary site of phosphorylation.

Its subcellular location is the cytoplasm. It is found in the cell junction. It localises to the focal adhesion. The protein localises to the nucleus. In terms of biological role, catalytically inactive protein kinase that acts as a scaffold protein. Functions as an effector of the small GTPase RND2, which stimulates RhoA activity and inhibits NGF-induced neurite outgrowth. Promotes Src family kinase (SFK) signaling by regulating the subcellular localization of CSK, a negative regulator of these kinases, leading to the regulation of cell morphology and motility by a CSK-dependent mechanism. Acts as a critical coactivator of Notch signaling. The chain is Inactive tyrosine-protein kinase PRAG1 from Homo sapiens (Human).